The sequence spans 553 residues: Hydroxylamine reductase (553 aa).

4 residues coordinate [2Fe-2S] cluster: Cys-3, Cys-6, Cys-18, and Cys-25. Residues His-252, Glu-276, Cys-320, Cys-408, Cys-436, Cys-461, Glu-495, and Lys-497 each coordinate hybrid [4Fe-2O-2S] cluster. The residue at position 408 (Cys-408) is a Cysteine persulfide.

This sequence belongs to the HCP family. Requires [2Fe-2S] cluster as cofactor. Hybrid [4Fe-2O-2S] cluster is required as a cofactor.

It localises to the cytoplasm. It carries out the reaction A + NH4(+) + H2O = hydroxylamine + AH2 + H(+). Its function is as follows. Catalyzes the reduction of hydroxylamine to form NH(3) and H(2)O. The chain is Hydroxylamine reductase from Vibrio parahaemolyticus serotype O3:K6 (strain RIMD 2210633).